The primary structure comprises 331 residues: Ferrochelatase (331 aa).

Fe cation is bound by residues H187 and E286.

The protein belongs to the ferrochelatase family.

It localises to the cytoplasm. It catalyses the reaction heme b + 2 H(+) = protoporphyrin IX + Fe(2+). The protein operates within porphyrin-containing compound metabolism; protoheme biosynthesis; protoheme from protoporphyrin-IX: step 1/1. In terms of biological role, catalyzes the ferrous insertion into protoporphyrin IX. In Legionella pneumophila subsp. pneumophila (strain Philadelphia 1 / ATCC 33152 / DSM 7513), this protein is Ferrochelatase.